The primary structure comprises 765 residues: MTTFLEFIQQNEDRDGVRFSWNVWPSSRLEATRMVVPVAALLTPLKERPDLPPIQYEPVLCSRTTCRAVLNPLCQVDYRAKLWACNFCYQRNQFPPTYAGISEMNQPAELLPQFSSIEYVVQRGPQMPLIFLYVVDTCMEDEDLQALKESMQMSLSLLPPTALVGLITFGRMVHVHELGCEGISKSYVFRGNKDLTGKQIQEMLSLTKSPAAQQGRGPQVQQPPPSNRFLQPVQNIDMNLTDLLGELQRDPWPVPQGKRPLRSSGAALSIAVGLLECTFPNTGARIMMFIGGPATQGPGMVVGDELKTPIRSWHDIEKDNAKYVKKATKHYEALAHRAAASGHVIDIYACALDQTGLLEMKCCPNNTGGYMVMGDSFNTSLFKQTFQRVFTKDAQSNFKMAFGGTLEIKTSRELKISGAIGPCVSLNAKGPCVSENEIGTGGTCQWKICGINPFTTLAVYFEVVNQHNAPIPQGGRGAIQFVTQYQHSSGQRRIRVTTIARNWADAQTQIQNIAASFDQEAAAILMARLAVYRAETEEGPDVLRWLDRQLIRLCQKFGEYHKDDPVSFKFSETFSLYPQFMFHLRRSPFLQVFNNSPDESSYYRHHFMRQDLTQSLIMVQPILYAYSFNGPPEPVLLDSSSILPDRILLMDTFFQILIYLGETIAQWKKAGYQDMPEYENFRHLLQAPVDDGQEILQSRFPMPRYIDTEHGGSQARFLLSKVNPSQTHNNMYGWGQESGAPILTDDVSLQVFMDHLKKLAVSSAA.

Zn(2+)-binding residues include Cys61, Cys66, Cys85, and Cys88. The Gelsolin-like repeat unit spans residues 632-718 (PEPVLLDSSS…EHGGSQARFL (87 aa)).

It belongs to the SEC23/SEC24 family. SEC23 subfamily. In terms of assembly, COPII is composed of at least five proteins: the Sec23/24 complex, the Sec13/31 complex and Sar1.

It is found in the cytoplasmic vesicle. The protein localises to the COPII-coated vesicle membrane. The protein resides in the endoplasmic reticulum membrane. It localises to the cytoplasm. Its subcellular location is the cytosol. Its function is as follows. Component of the coat protein complex II (COPII) which promotes the formation of transport vesicles from the endoplasmic reticulum (ER). The coat has two main functions, the physical deformation of the endoplasmic reticulum membrane into vesicles and the selection of cargo molecules for their transport to the Golgi complex. The protein is Protein transport protein Sec23A of Xenopus tropicalis (Western clawed frog).